The chain runs to 303 residues: Glutaminase (303 aa).

Residues serine 63, asparagine 113, glutamate 157, asparagine 164, tyrosine 188, tyrosine 239, and valine 257 each coordinate substrate.

It belongs to the glutaminase family. Homotetramer.

The enzyme catalyses L-glutamine + H2O = L-glutamate + NH4(+). The chain is Glutaminase from Saccharopolyspora erythraea (strain ATCC 11635 / DSM 40517 / JCM 4748 / NBRC 13426 / NCIMB 8594 / NRRL 2338).